A 523-amino-acid chain; its full sequence is Mitochondrial distribution and morphology protein 34 (523 aa).

Residues 1-200 (MSFKVNWKSL…LPTLIHQFSL (200 aa)) enclose the SMP-LTD domain. The interval 489-523 (ELSMDRSGKRKQRNYGSATYESENPIVAPPPPYSH) is disordered.

This sequence belongs to the MDM34 family. As to quaternary structure, component of the ER-mitochondria encounter structure (ERMES) or MDM complex, composed of MMM1, MDM10, MDM12 and MDM34.

Its subcellular location is the mitochondrion outer membrane. Its function is as follows. Component of the ERMES/MDM complex, which serves as a molecular tether to connect the endoplasmic reticulum (ER) and mitochondria. Components of this complex are involved in the control of mitochondrial shape and protein biogenesis, and function in nonvesicular lipid trafficking between the ER and mitochondria. MDM34 is required for the interaction of the ER-resident membrane protein MMM1 and the outer mitochondrial membrane-resident beta-barrel protein MDM10. This chain is Mitochondrial distribution and morphology protein 34, found in Scheffersomyces stipitis (strain ATCC 58785 / CBS 6054 / NBRC 10063 / NRRL Y-11545) (Yeast).